The chain runs to 353 residues: Melanin-concentrating hormone receptor 1 (353 aa).

The segment at 1-26 (MDLQTSLLSTGPNASNISDGQDNLTL) is disordered. Residues 1-45 (MDLQTSLLSTGPNASNISDGQDNLTLPGSPPRTGSVSYINIIMPS) are Extracellular-facing. 3 N-linked (GlcNAc...) asparagine glycosylation sites follow: Asn-13, Asn-16, and Asn-23. The helical transmembrane segment at 46–66 (VFGTICLLGIVGNSTVIFAVV) threads the bilayer. The Cytoplasmic portion of the chain corresponds to 67–79 (KKSKLHWCSNVPD). The chain crosses the membrane as a helical span at residues 80-100 (IFIINLSVVDLLFLLGMPFMI). The Extracellular portion of the chain corresponds to 101–116 (HQLMGNGVWHFGETMC). Cys-116 and Cys-194 are disulfide-bonded. A helical membrane pass occupies residues 117–139 (TLITAMDANSQFTSTYILTAMTI). Residues 140-161 (DRYLATVHPISSTKFRKPSMAT) lie on the Cytoplasmic side of the membrane. A helical transmembrane segment spans residues 162-182 (LVICLLWALSFISITPVWLYA). The Extracellular segment spans residues 183-204 (RLIPFPGGAVGCGIRLPNPDTD). Residues 205–225 (LYWFTLYQFFLAFALPFVVIT) form a helical membrane-spanning segment. The Cytoplasmic portion of the chain corresponds to 226 to 256 (AAYVKILQRMTSSVAPASQRSIRLRTKRVTR). Residues 257 to 277 (TAIAICLVFFVCWAPYYVLQL) traverse the membrane as a helical segment. Residues 278–294 (TQLSISRPTLTFVYLYN) lie on the Extracellular side of the membrane. A helical membrane pass occupies residues 295 to 315 (AAISLGYANSCLNPFVYIVLC). Over 316–353 (ETFRKRLVLSVKPAAQGQLRTVSNAQTADEERTESKGT) the chain is Cytoplasmic.

It belongs to the G-protein coupled receptor 1 family. In terms of assembly, interacts with NCDN. In terms of tissue distribution, high level in the brain, moderate amounts in the eye and skeletal muscle, and small amounts in tongue and pituitary.

Its subcellular location is the cell membrane. Receptor for melanin-concentrating hormone, coupled to G proteins that inhibit adenylyl cyclase. This is Melanin-concentrating hormone receptor 1 from Rattus norvegicus (Rat).